The following is a 401-amino-acid chain: Nicotinate phosphoribosyltransferase (401 aa).

His-221 carries the post-translational modification Phosphohistidine; by autocatalysis.

The protein belongs to the NAPRTase family. Post-translationally, transiently phosphorylated on a His residue during the reaction cycle. Phosphorylation strongly increases the affinity for substrates and increases the rate of nicotinate D-ribonucleotide production. Dephosphorylation regenerates the low-affinity form of the enzyme, leading to product release.

It carries out the reaction nicotinate + 5-phospho-alpha-D-ribose 1-diphosphate + ATP + H2O = nicotinate beta-D-ribonucleotide + ADP + phosphate + diphosphate. Its pathway is cofactor biosynthesis; NAD(+) biosynthesis; nicotinate D-ribonucleotide from nicotinate: step 1/1. Its function is as follows. Catalyzes the synthesis of beta-nicotinate D-ribonucleotide from nicotinate and 5-phospho-D-ribose 1-phosphate at the expense of ATP. In Edwardsiella ictaluri (strain 93-146), this protein is Nicotinate phosphoribosyltransferase.